The following is a 245-amino-acid chain: tRNA (guanine-N(1)-)-methyltransferase (245 aa).

S-adenosyl-L-methionine contacts are provided by residues Gly-111 and 131-136; that span reads MGDYVL.

It belongs to the RNA methyltransferase TrmD family. Homodimer.

Its subcellular location is the cytoplasm. The catalysed reaction is guanosine(37) in tRNA + S-adenosyl-L-methionine = N(1)-methylguanosine(37) in tRNA + S-adenosyl-L-homocysteine + H(+). Specifically methylates guanosine-37 in various tRNAs. This Staphylococcus aureus (strain Mu3 / ATCC 700698) protein is tRNA (guanine-N(1)-)-methyltransferase.